We begin with the raw amino-acid sequence, 331 residues long: Biotin synthase (331 aa).

A Radical SAM core domain is found at 53–272 (NHVETASLLS…LATARVMMPR (220 aa)). 3 residues coordinate [4Fe-4S] cluster: C68, C72, and C75. Positions 112, 143, 203, and 276 each coordinate [2Fe-2S] cluster.

It belongs to the radical SAM superfamily. Biotin synthase family. Homodimer. [4Fe-4S] cluster is required as a cofactor. It depends on [2Fe-2S] cluster as a cofactor.

It carries out the reaction (4R,5S)-dethiobiotin + (sulfur carrier)-SH + 2 reduced [2Fe-2S]-[ferredoxin] + 2 S-adenosyl-L-methionine = (sulfur carrier)-H + biotin + 2 5'-deoxyadenosine + 2 L-methionine + 2 oxidized [2Fe-2S]-[ferredoxin]. It functions in the pathway cofactor biosynthesis; biotin biosynthesis; biotin from 7,8-diaminononanoate: step 2/2. In terms of biological role, catalyzes the conversion of dethiobiotin (DTB) to biotin by the insertion of a sulfur atom into dethiobiotin via a radical-based mechanism. In Bradyrhizobium diazoefficiens (strain JCM 10833 / BCRC 13528 / IAM 13628 / NBRC 14792 / USDA 110), this protein is Biotin synthase.